A 503-amino-acid polypeptide reads, in one-letter code: ATP synthase subunit alpha (503 aa).

169-176 (GDRKTGKT) is a binding site for ATP.

It belongs to the ATPase alpha/beta chains family. F-type ATPases have 2 components, CF(1) - the catalytic core - and CF(0) - the membrane proton channel. CF(1) has five subunits: alpha(3), beta(3), gamma(1), delta(1), epsilon(1). CF(0) has three main subunits: a(1), b(2) and c(9-12). The alpha and beta chains form an alternating ring which encloses part of the gamma chain. CF(1) is attached to CF(0) by a central stalk formed by the gamma and epsilon chains, while a peripheral stalk is formed by the delta and b chains.

The protein localises to the cell membrane. The enzyme catalyses ATP + H2O + 4 H(+)(in) = ADP + phosphate + 5 H(+)(out). Functionally, produces ATP from ADP in the presence of a proton gradient across the membrane. The alpha chain is a regulatory subunit. This Lactobacillus delbrueckii subsp. bulgaricus (strain ATCC BAA-365 / Lb-18) protein is ATP synthase subunit alpha.